The following is a 224-amino-acid chain: Orotate phosphoribosyltransferase (224 aa).

5-phospho-alpha-D-ribose 1-diphosphate-binding positions include lysine 26, 73-74, arginine 100, lysine 101, lysine 104, histidine 106, and 127-135; these read YK and EDVTTAGTS. Positions 131 and 160 each coordinate orotate.

This sequence belongs to the purine/pyrimidine phosphoribosyltransferase family. PyrE subfamily. In terms of assembly, homodimer. Mg(2+) is required as a cofactor.

The enzyme catalyses orotidine 5'-phosphate + diphosphate = orotate + 5-phospho-alpha-D-ribose 1-diphosphate. It functions in the pathway pyrimidine metabolism; UMP biosynthesis via de novo pathway; UMP from orotate: step 1/2. Catalyzes the transfer of a ribosyl phosphate group from 5-phosphoribose 1-diphosphate to orotate, leading to the formation of orotidine monophosphate (OMP). This chain is Orotate phosphoribosyltransferase, found in Clostridium acetobutylicum (strain ATCC 824 / DSM 792 / JCM 1419 / IAM 19013 / LMG 5710 / NBRC 13948 / NRRL B-527 / VKM B-1787 / 2291 / W).